A 102-amino-acid polypeptide reads, in one-letter code: Small ribosomal subunit protein uS10 (102 aa).

This sequence belongs to the universal ribosomal protein uS10 family. As to quaternary structure, part of the 30S ribosomal subunit.

In terms of biological role, involved in the binding of tRNA to the ribosomes. This chain is Small ribosomal subunit protein uS10, found in Myxococcus xanthus (strain DK1622).